The sequence spans 370 residues: MMAAASDSCLSLWEGSASSPNRQLTPEAVNCLTEALTEDVAVLRLIRSDPRVKIFMAVSVLTPRLARFAPPPPKLTHTAKCAVIMIYLTRPKALALQPKQFHMLVTFNKASVYSLVVRVKTKPFPVGTQRFRAVFQDPESIGLPSDIPDPAAENIPTEINDRLDVSNFATPAQPPKDKYDCCVLAPGVWWSNANKAIYFLQMDVALLALCPAGWKARGLGIILGRLLNHQEGCATCRFTEHSDPLNATADSVATPESCLCWAPCLWRKAHQRELTVEGDRYLFRVLFMDAVERVRLTGLRRSPKITANLADLVVGIGPHGQQIPVNNAGWKLVALDADISRLIVCGCYALRYICPPTNSKHQPSSPDEYA.

The protein belongs to the herpesviridae cytoplasmic envelopment protein 2 family. As to quaternary structure, interacts with cytoplasmic envelopment protein 3 and with the capsid.

The protein localises to the virion tegument. It localises to the host cytoplasm. It is found in the host nucleus. In terms of biological role, plays a critical role in cytoplasmic virus egress. Participates in the final step of tegumentation and envelope acquisition within the host cytoplasm by directly interacting with the capsid. Upon virion binding to target cell, a signaling cascade is triggered to disrupt the interaction with the capsid, thereby preparing capsid uncoating. The polypeptide is Cytoplasmic envelopment protein 2 (Equine herpesvirus 1 (strain V592) (EHV-1)).